Here is a 582-residue protein sequence, read N- to C-terminus: PTS system lactose-specific EIICB component (582 aa).

In terms of domain architecture, PTS EIIC type-3 spans 8-409 (IEKGKPFFEK…VVDVIIYYPF (402 aa)). Transmembrane regions (helical) follow at residues 30–50 (GFIA…ITYV), 64–84 (GILM…VAGT), 103–123 (INFI…AADP), 137–157 (KGLL…NFFV), 176–196 (VFKD…LDLL), 222–242 (GWIG…VGIH), 283–303 (FVAT…FMWL), 339–359 (VFFI…KFFV), and 381–401 (IVMG…LIVV). The interval 453-473 (ASEADTDDTSSVDETTSTSST) is disordered. A compositionally biased stretch (low complexity) spans 464–473 (VDETTSTSST). Positions 479–582 (QTNVLVLCAG…LEFVKQQFNN (104 aa)) constitute a PTS EIIB type-3 domain. Residue Cys-486 is the Phosphocysteine intermediate; for EIIB activity of the active site. Cys-486 carries the phosphocysteine; by EIIA modification.

Its subcellular location is the cell membrane. It carries out the reaction lactose(out) + N(pros)-phospho-L-histidyl-[protein] = lactose 6-phosphate(in) + L-histidyl-[protein]. Functionally, the phosphoenolpyruvate-dependent sugar phosphotransferase system (sugar PTS), a major carbohydrate active transport system, catalyzes the phosphorylation of incoming sugar substrates concomitantly with their translocation across the cell membrane. The enzyme II LacEF PTS system is involved in lactose transport. The polypeptide is PTS system lactose-specific EIICB component (Staphylococcus epidermidis (strain ATCC 35984 / DSM 28319 / BCRC 17069 / CCUG 31568 / BM 3577 / RP62A)).